Consider the following 827-residue polypeptide: SID1 transmembrane family member 1 (827 aa).

The N-terminal stretch at 1 to 19 is a signal peptide; it reads MLDCLRLALLCALPWLLRA. Residues 20–309 are Extracellular-facing; sequence AVPGHQEEPL…SIKESVYVKS (290 aa). N-linked (GlcNAc...) asparagine glycans are attached at residues Asn67, Asn83, Asn136, and Asn282. The chain crosses the membrane as a helical span at residues 310–330; that stretch reads SLFSIFVFLSFYLGCLLVVLV. The Cytoplasmic portion of the chain corresponds to 331–442; sequence HHVRFQRKSI…DRRIVSKKYK (112 aa). Positions 344 to 409 are disordered; the sequence is FGSSDGSGNM…VEESDFDTMP (66 aa). A compositionally biased stretch (low complexity) spans 375–386; it reads SSSSPGRQMSSS. Positions 398–409 are enriched in acidic residues; that stretch reads SSVEESDFDTMP. The helical transmembrane segment at 443–463 threads the bilayer; sequence IYFWNIITIAVFYALPVMQLV. Residues 464–494 are Extracellular-facing; that stretch reads ITYQTVVNVTGNQDICYYNFLCAHPLGVLSA. N-linked (GlcNAc...) asparagine glycosylation occurs at Asn471. Residues 495 to 515 traverse the membrane as a helical segment; sequence FNNILSNLGHVLLGFLFLLIV. The Cytoplasmic segment spans residues 516–541; sequence LRRDLLHRRALEAKDIFAMEYGIPKH. The chain crosses the membrane as a helical span at residues 542-562; that stretch reads FGLFYAMGIALMMEGVLSACY. Topologically, residues 563–572 are extracellular; the sequence is HVCPNYSNFQ. An N-linked (GlcNAc...) asparagine glycan is attached at Asn567. Residues 573-590 form a helical membrane-spanning segment; that stretch reads FDTSFMYMIAGLCMLKLY. Topologically, residues 591 to 600 are cytoplasmic; it reads QTRHPDINAS. A helical membrane pass occupies residues 601–621; it reads AYSAYASFAVVITLTVLGVVF. Topologically, residues 622–626 are extracellular; that stretch reads GKNDV. A helical transmembrane segment spans residues 627–647; the sequence is WFWIIFSAIHILSSLALSTQI. The Cytoplasmic portion of the chain corresponds to 648–683; it reads YYMGRFKIDLGIFRRAAMVFYTDCIQQCSRPLYMDR. A helical transmembrane segment spans residues 684 to 704; sequence MVLLIVGNLVNWSFAFFGLIY. Topologically, residues 705–710 are extracellular; it reads RPRDFA. A helical membrane pass occupies residues 711–731; the sequence is SYMLGIFICNLLLYLAFYIIM. At 732–741 the chain is on the cytoplasmic side; the sequence is KLRSSEKVLP. The chain crosses the membrane as a helical span at residues 742-762; the sequence is LPVFCIAATAVVWAAALYFFF. Residues 763-791 are Extracellular-facing; it reads QNLSSWEGTPAESREKNRECVLLDFFDDH. Asn764 carries an N-linked (GlcNAc...) asparagine glycan. The chain crosses the membrane as a helical span at residues 792–812; the sequence is DIWHFLSATALFFSFLVLLTL. The Cytoplasmic portion of the chain corresponds to 813-827; sequence DDDLDVVRRDQIPVF.

This sequence belongs to the SID1 family.

Its subcellular location is the membrane. In vitro binds long double-stranded RNA (dsRNA) (500 and 700 base pairs), but not dsRNA shorter than 300 bp. Not involved in RNA autophagy, a process in which RNA is directly imported into lysosomes in an ATP-dependent manner, and degraded. The polypeptide is SID1 transmembrane family member 1 (Sidt1) (Mus musculus (Mouse)).